Reading from the N-terminus, the 115-residue chain is U3-lycotoxin-Ls1n (115 aa).

The signal sequence occupies residues 1–20; sequence MKFVLLFGVLLVTLFSYSSA. Positions 21–44 are excised as a propeptide; the sequence is EMLDDFDQADEDELLSLIEKEEAR. Cystine bridges form between cysteine 48–cysteine 63, cysteine 55–cysteine 72, cysteine 62–cysteine 87, and cysteine 74–cysteine 85.

This sequence belongs to the neurotoxin 19 (CSTX) family. 01 subfamily. As to expression, expressed by the venom gland.

It localises to the secreted. This chain is U3-lycotoxin-Ls1n, found in Lycosa singoriensis (Wolf spider).